Reading from the N-terminus, the 976-residue chain is Leucine--tRNA ligase (976 aa).

The span at 1–23 (MTESPTTTPGSTSGAPSGVPSGV) shows a compositional bias: low complexity. The segment at 1–34 (MTESPTTTPGSTSGAPSGVPSGVNDAESDAPRHR) is disordered. Residues 86–97 (PYPSGEGLHVGH) carry the 'HIGH' region motif. A 'KMSKS' region motif is present at residues 745-749 (KIGKS). Lys748 is a binding site for ATP.

It belongs to the class-I aminoacyl-tRNA synthetase family.

Its subcellular location is the cytoplasm. The enzyme catalyses tRNA(Leu) + L-leucine + ATP = L-leucyl-tRNA(Leu) + AMP + diphosphate. The polypeptide is Leucine--tRNA ligase (Mycobacterium ulcerans (strain Agy99)).